The chain runs to 161 residues: Small ribosomal subunit protein uS8m (161 aa).

It belongs to the universal ribosomal protein uS8 family. As to quaternary structure, component of the mitochondrial small ribosomal subunit (mt-SSU). Mature N.crassa 74S mitochondrial ribosomes consist of a small (37S) and a large (54S) subunit. The 37S small subunit contains a 16S ribosomal RNA (16S mt-rRNA) and 32 different proteins. The 54S large subunit contains a 23S rRNA (23S mt-rRNA) and 42 different proteins.

It localises to the mitochondrion. In terms of biological role, component of the mitochondrial ribosome (mitoribosome), a dedicated translation machinery responsible for the synthesis of mitochondrial genome-encoded proteins, including at least some of the essential transmembrane subunits of the mitochondrial respiratory chain. The mitoribosomes are attached to the mitochondrial inner membrane and translation products are cotranslationally integrated into the membrane. This Neurospora crassa (strain ATCC 24698 / 74-OR23-1A / CBS 708.71 / DSM 1257 / FGSC 987) protein is Small ribosomal subunit protein uS8m (mrps8).